A 424-amino-acid chain; its full sequence is Probable methyltransferase EP424R (424 aa).

Positions 103-315 constitute an Adrift-type SAM-dependent 2'-O-MTase domain; sequence QIVTNAWLKM…TYIVGKNRLR (213 aa). 2 residues coordinate S-adenosyl-L-methionine: G135 and D228. K268 acts as the Proton acceptor in catalysis.

It localises to the virion. This chain is Probable methyltransferase EP424R, found in Ornithodoros (relapsing fever ticks).